We begin with the raw amino-acid sequence, 87 residues long: MNSALNEIKDDFENCETKNDLFKIIDKISKNCNFIVEQVESLPRRVDSAAILFDNLAVEIFNDVIYRQNGDGVAAKIRQGNGQNIDT.

Belongs to the herpesviridae UL91 family.

The polypeptide is Protein U62 (U62) (Human herpesvirus 6B (strain Z29) (HHV-6 variant B)).